A 496-amino-acid polypeptide reads, in one-letter code: Probable ATP-dependent DNA helicase RecS (496 aa).

The Helicase ATP-binding domain occupies 25–192; sequence IESILSGKDT…MNLLELQHAV (168 aa). An ATP-binding site is contributed by 38-45; the sequence is LPTGGGKS. The DEAH box motif lies at 136–139; it reads DEAH. In terms of domain architecture, Helicase C-terminal spans 219–363; sequence RVIQLVENLQ…EIADVIRVLE (145 aa).

The protein belongs to the helicase family. RecQ subfamily. Interacts with SSB (ssbA) and YpbB.

It localises to the cytoplasm. It is found in the nucleoid. It catalyses the reaction Couples ATP hydrolysis with the unwinding of duplex DNA by translocating in the 3'-5' direction.. It carries out the reaction ATP + H2O = ADP + phosphate + H(+). Its function is as follows. Probable 3'-5' DNA helicase. Required in synaptic and/or post-synaptic stages of recombination. Probably has an overlapping function with RecQ. It probably acts to help generate ss-DNA from ds-DNA breaks. This chain is Probable ATP-dependent DNA helicase RecS, found in Bacillus subtilis (strain 168).